Consider the following 80-residue polypeptide: Consomatin Mrc1 (80 aa).

An N-terminal signal peptide occupies residues Met1–Gly22. A propeptide spanning residues Gly23–Arg57 is cleaved from the precursor. A disulfide bond links Cys63 and Cys68. Trp65 is subject to D-tryptophan. 4-hydroxyproline is present on residues Pro69, Pro70, Pro71, and Pro72. A propeptide spanning residues Arg74 to Gly80 is cleaved from the precursor.

This sequence belongs to the conotoxin C superfamily. Consomatin family. Expressed by the venom duct.

It localises to the secreted. In terms of biological role, moderately activates human somatostatin receptors (SSTR) with a preferential activation of SSTR1 and SSTR4. In vivo, does not cause behavioral changes in mice within a few minutes of intracranial injection, but causes a progressive loss of movement thereafter. Four to five hours after injection, mice recover, even with the highest dose tested. Shows antinociception and antihyperalgesia activities in two mouse models of acute pain, most probably by acting outside the central nervous system. The polypeptide is Consomatin Mrc1 (Conus mercator (Trader cone)).